The sequence spans 110 residues: Late cornified envelope protein 2D (110 aa).

It belongs to the LCE family. As to expression, skin-specific. Expression was readily detected in adult trunk skin, adult arm skin, fetal skin, penal skin, vulva, esophagus and tongue. Not expressed in the cervix, rectum, lung, colon, or placenta.

Functionally, precursors of the cornified envelope of the stratum corneum. The polypeptide is Late cornified envelope protein 2D (LCE2D) (Homo sapiens (Human)).